Here is a 208-residue protein sequence, read N- to C-terminus: Protein GrpE (208 aa).

Residues Met1–Thr12 are compositionally biased toward basic and acidic residues. The segment at Met1–Asn51 is disordered. Residues Glu13–Gln23 are compositionally biased toward polar residues. Over residues Glu42 to Asn51 the composition is skewed to acidic residues.

Belongs to the GrpE family. Homodimer.

Its subcellular location is the cytoplasm. Participates actively in the response to hyperosmotic and heat shock by preventing the aggregation of stress-denatured proteins, in association with DnaK and GrpE. It is the nucleotide exchange factor for DnaK and may function as a thermosensor. Unfolded proteins bind initially to DnaJ; upon interaction with the DnaJ-bound protein, DnaK hydrolyzes its bound ATP, resulting in the formation of a stable complex. GrpE releases ADP from DnaK; ATP binding to DnaK triggers the release of the substrate protein, thus completing the reaction cycle. Several rounds of ATP-dependent interactions between DnaJ, DnaK and GrpE are required for fully efficient folding. The polypeptide is Protein GrpE (Staphylococcus aureus (strain USA300)).